A 226-amino-acid chain; its full sequence is MAKLSKKMKIAVGLVDKTKLYPLQEAVDLVKKTSITKFNGSVDIAVSLNLDTTKAEQQLRGAIAFPHSVGKPIRILAITDDEKAALEAGADFVGGIDKINDIKNGWLDFDLIITSPKFMAALGKLGKLLGTKGLMPNPKTETVTDDVPAAVRAYKKGKKEYRADSFGNIHMSLGRVDSASNHLVENALALLDLIKSRKPATVKGIYIKNIALTTTMGPSLKVKLPD.

Belongs to the universal ribosomal protein uL1 family. In terms of assembly, part of the 50S ribosomal subunit.

Functionally, binds directly to 23S rRNA. The L1 stalk is quite mobile in the ribosome, and is involved in E site tRNA release. In terms of biological role, protein L1 is also a translational repressor protein, it controls the translation of the L11 operon by binding to its mRNA. The polypeptide is Large ribosomal subunit protein uL1 (Mycoplasma pneumoniae (strain ATCC 29342 / M129 / Subtype 1) (Mycoplasmoides pneumoniae)).